The following is a 336-amino-acid chain: N-acetyl-gamma-glutamyl-phosphate reductase (336 aa).

C156 is a catalytic residue.

Belongs to the NAGSA dehydrogenase family. Type 1 subfamily.

Its subcellular location is the cytoplasm. It catalyses the reaction N-acetyl-L-glutamate 5-semialdehyde + phosphate + NADP(+) = N-acetyl-L-glutamyl 5-phosphate + NADPH + H(+). Its pathway is amino-acid biosynthesis; L-arginine biosynthesis; N(2)-acetyl-L-ornithine from L-glutamate: step 3/4. Catalyzes the NADPH-dependent reduction of N-acetyl-5-glutamyl phosphate to yield N-acetyl-L-glutamate 5-semialdehyde. The polypeptide is N-acetyl-gamma-glutamyl-phosphate reductase (Moritella profunda).